A 585-amino-acid polypeptide reads, in one-letter code: MSRARCHALFLAAVSPRGATTRVAVRRGLSAWPVLQEPDMEYQDAVRTLNTLQTNANYLEMVKRKRGDPQTQLEAMKLYLARSGLQVEDLDQLNIIHITGTKGKGSTCAFTERILRSYGLKTGFFSSPHLVQVRERIRINGQPISSELFTKHFWRLYHRLEETKDDSSCVSMPGYFRFLTLMAFHVFLQEKVDLAVLEVGIGGAYDCTNIIRKPVVCGITSLGIDHTGLLGDTMEKIAWQKGGIFKSGVPAFTVLQPDEPLAVLRDRAQQISCPLYLCPPLQALEEGGPPLTLGLEGEHQRSNAALALQVARCWLQQKGYQDAGELKASRPSLPGQLPLAPVFQPTPRMQQGLRHTEWPGRTQLLRRGPLTWYLDGAHTTSSMQACVRWFRQALHRCERPDSGSEVRVLLFNSTGDRDSAALLKLLQPCQFDYAIFCPNLAEMASTDNADQQNFTVTLDQVLLRCLAHQQHWSRLHEEQVSPDPWSTPGQEQDGPASLLLAPHPPHTHSASSLVFSCISHALQWITQGRDPLFQPPSPPRGLLAHPVADSGATVLQEAADIHVLVTGSLHLVGGVLKLLEPSLSQ.

Residues 1–39 (MSRARCHALFLAAVSPRGATTRVAVRRGLSAWPVLQEPD) constitute a mitochondrion transit peptide. 103–106 (GKGS) lines the ATP pocket. Mg(2+) contacts are provided by serine 127, glutamate 198, and histidine 226. ATP-binding residues include arginine 361 and aspartate 375. Residues 477 to 497 (EEQVSPDPWSTPGQEQDGPAS) are disordered. Phosphoserine is present on serine 537.

It belongs to the folylpolyglutamate synthase family. Monomer. It depends on a monovalent cation as a cofactor.

The protein localises to the mitochondrion inner membrane. It localises to the mitochondrion matrix. Its subcellular location is the cytoplasm. The enzyme catalyses (6S)-5,6,7,8-tetrahydrofolyl-(gamma-L-Glu)(n) + L-glutamate + ATP = (6S)-5,6,7,8-tetrahydrofolyl-(gamma-L-Glu)(n+1) + ADP + phosphate + H(+). It participates in cofactor biosynthesis; tetrahydrofolylpolyglutamate biosynthesis. Catalyzes conversion of folates to polyglutamate derivatives allowing concentration of folate compounds in the cell and the intracellular retention of these cofactors, which are important substrates for most of the folate-dependent enzymes that are involved in one-carbon transfer reactions involved in purine, pyrimidine and amino acid synthesis. The protein is Folylpolyglutamate synthase, mitochondrial (FPGS) of Bos taurus (Bovine).